The chain runs to 429 residues: Xyloglucan O-acetyltransferase 1 (429 aa).

Over 1-20 (MGSPFKDHHHHHHPFSLAKK) the chain is Cytoplasmic. A helical; Signal-anchor for type II membrane protein membrane pass occupies residues 21–41 (LIPWTFYAMIPLVLFRLYFYP). Topologically, residues 42-429 (YPLHNITTPI…KWDYESRREE (388 aa)) are lumenal. N-linked (GlcNAc...) asparagine glycosylation is found at Asn-46 and Asn-89. 4 disulfide bridges follow: Cys-72–Cys-122, Cys-93–Cys-158, Cys-102–Cys-402, and Cys-317–Cys-398. Positions 145 to 147 (GDS) match the GDS motif motif. Ser-147 (nucleophile) is an active-site residue. Asn-189, Asn-263, and Asn-351 each carry an N-linked (GlcNAc...) asparagine glycan. Asp-397 functions as the Proton donor in the catalytic mechanism. Residues 397–400 (DCVH) carry the DXXH motif motif. The active-site Proton acceptor is His-400.

Belongs to the PC-esterase family. TBL subfamily.

The protein localises to the golgi apparatus membrane. Functionally, xyloglucan acetyltransferase that catalyzes the acetylation of fucosylated Gal residues on xyloglucan side chains. Predominantly catalyze 6-O-monoacetylation of Gal residues in the Fuc-Gal-Xyl trisaccharide side chains of xyloglucan oligomers. The chain is Xyloglucan O-acetyltransferase 1 from Populus trichocarpa (Western balsam poplar).